We begin with the raw amino-acid sequence, 337 residues long: Adenylosuccinate synthetase (337 aa).

GTP-binding positions include 12-18 (GDEGKGK) and 42-44 (GHT). The Proton acceptor role is filled by aspartate 13. Positions 13 and 42 each coordinate Mg(2+). IMP is bound by residues 13–16 (DEGK), 40–43 (NAGH), threonine 127, arginine 141, glutamine 179, threonine 194, and arginine 256. Residue histidine 43 is the Proton donor of the active site. Position 252-258 (252-258 (TVTGRRR)) interacts with substrate. Residues arginine 258, 284-286 (CLD), and 324-326 (STG) contribute to the GTP site.

It belongs to the adenylosuccinate synthetase family. As to quaternary structure, homodimer. It depends on Mg(2+) as a cofactor.

The protein resides in the cytoplasm. It catalyses the reaction IMP + L-aspartate + GTP = N(6)-(1,2-dicarboxyethyl)-AMP + GDP + phosphate + 2 H(+). It participates in purine metabolism; AMP biosynthesis via de novo pathway; AMP from IMP: step 1/2. Functionally, plays an important role in the de novo pathway of purine nucleotide biosynthesis. Catalyzes the first committed step in the biosynthesis of AMP from IMP. The polypeptide is Adenylosuccinate synthetase (Methanococcus maripaludis (strain C5 / ATCC BAA-1333)).